The chain runs to 580 residues: Acyl-coenzyme A synthetase ACSM4, mitochondrial (580 aa).

A mitochondrion-targeting transit peptide spans 1-22 (MKVLLRCQRLRFIWLAKPAGRH). ATP contacts are provided by residues 229–237 (TSGTTGSPK), 368–373 (EGYGQT), aspartate 455, arginine 470, and lysine 566.

The protein belongs to the ATP-dependent AMP-binding enzyme family. Mg(2+) is required as a cofactor. It depends on Mn(2+) as a cofactor. Detected in adult olfactory epithelium.

It localises to the mitochondrion. The catalysed reaction is a medium-chain fatty acid + ATP + CoA = a medium-chain fatty acyl-CoA + AMP + diphosphate. It carries out the reaction hexanoate + ATP + CoA = hexanoyl-CoA + AMP + diphosphate. It catalyses the reaction octanoate + ATP + CoA = octanoyl-CoA + AMP + diphosphate. The enzyme catalyses decanoate + ATP + CoA = decanoyl-CoA + AMP + diphosphate. The catalysed reaction is dodecanoate + ATP + CoA = dodecanoyl-CoA + AMP + diphosphate. Its function is as follows. Catalyzes the activation of fatty acids by CoA to produce an acyl-CoA, the first step in fatty acid metabolism. Capable of activating medium-chain fatty acids with a preference for C6-12 fatty acids. This is Acyl-coenzyme A synthetase ACSM4, mitochondrial (Acsm4) from Rattus norvegicus (Rat).